A 736-amino-acid chain; its full sequence is Zinc finger CCCH domain-containing protein 14 (736 aa).

Met-1 is subject to N-acetylmethionine. Residues 77-103 are compositionally biased toward polar residues; it reads TTEPSSLKSPDTSIFDSNVPSNKSSFS. Residues 77–153 are disordered; the sequence is TTEPSSLKSP…RHSYDDGAST (77 aa). The residue at position 85 (Ser-85) is a Phosphoserine. Residues Lys-99, Lys-139, Lys-175, and Lys-198 each participate in a glycyl lysine isopeptide (Lys-Gly) (interchain with G-Cter in SUMO2) cross-link. The span at 123–148 shows a compositional bias: basic and acidic residues; sequence RPEKRDSRVSTSSQEHKSTNVRHSYD. A Phosphoserine modification is found at Ser-240. Residues Lys-245, Lys-283, and Lys-295 each participate in a glycyl lysine isopeptide (Lys-Gly) (interchain with G-Cter in SUMO2) cross-link. The segment at 308–350 is disordered; sequence FSHDGEEEEEDEDYGTRVGSLSSSVSVPAKPERRPSLPPSKQA. Residues Ser-309, Ser-327, and Ser-343 each carry the phosphoserine modification. Lys-357 carries the N6-acetyllysine; alternate modification. Residue Lys-357 forms a Glycyl lysine isopeptide (Lys-Gly) (interchain with G-Cter in SUMO2); alternate linkage. Polar residues predominate over residues 367 to 380; it reads TKTTNYPAVPQKQT. Residues 367 to 386 form a disordered region; the sequence is TKTTNYPAVPQKQTLPVAPR. Lys-378 is covalently cross-linked (Glycyl lysine isopeptide (Lys-Gly) (interchain with G-Cter in SUMO2)). Phosphoserine is present on residues Ser-390 and Ser-409. The tract at residues 400-420 is disordered; that stretch reads QGQNRAPRISPPVKEEEAKGD. Glycyl lysine isopeptide (Lys-Gly) (interchain with G-Cter in SUMO2) cross-links involve residues Lys-413 and Lys-489. Phosphoserine is present on residues Ser-498, Ser-515, Ser-527, and Ser-620. 5 C3H1-type zinc fingers span residues 595–620, 621–640, 641–656, 682–699, and 701–719; these read EKLL…HPIS, PCKA…VHPN, CKYD…PFTH, CRYF…YHPK, and CRFN…HPTI.

Belongs to the ZC3H14 family. In terms of assembly, homodimer; facilitating circular RNAs (circRNAs) formation. Associates with the spliceosome. Interacts with HOOK2. Interacts with ZFC3H1 in a RNase-sensitive manner.

It is found in the nucleus speckle. In terms of biological role, RNA-binding protein involved in the biogenesis of circular RNAs (circRNAs), which are produced by back-splicing circularization of pre-mRNAs. Acts by binding to both exon-intron boundary and 3'-UTR of pre-mRNAs to promote circRNA biogenesis through dimerization and the association with the spliceosome. Required for spermatogenesis via involvement in circRNA biogenesis. Regulates the pre-mRNA processing of ATP5MC1; preventing its degradation. Also binds the poly(A) tail of mRNAs; controlling poly(A) length in neuronal cells. This chain is Zinc finger CCCH domain-containing protein 14, found in Rattus norvegicus (Rat).